The primary structure comprises 209 residues: Large ribosomal subunit protein bL25 (209 aa).

Residues 185 to 209 (SKATTGEEEGAEAAGEGEEAEEKPE) form a disordered region. The span at 190–209 (GEEEGAEAAGEGEEAEEKPE) shows a compositional bias: acidic residues.

This sequence belongs to the bacterial ribosomal protein bL25 family. CTC subfamily. As to quaternary structure, part of the 50S ribosomal subunit; part of the 5S rRNA/L5/L18/L25 subcomplex. Contacts the 5S rRNA. Binds to the 5S rRNA independently of L5 and L18.

This is one of the proteins that binds to the 5S RNA in the ribosome where it forms part of the central protuberance. The sequence is that of Large ribosomal subunit protein bL25 from Syntrophomonas wolfei subsp. wolfei (strain DSM 2245B / Goettingen).